A 253-amino-acid chain; its full sequence is Large ribosomal subunit protein uL2C (253 aa).

This sequence belongs to the universal ribosomal protein uL2 family. Component of the large ribosomal subunit (LSU). Mature yeast ribosomes consist of a small (40S) and a large (60S) subunit. The 40S small subunit contains 1 molecule of ribosomal RNA (18S rRNA) and at least 33 different proteins. The large 60S subunit contains 3 rRNA molecules (25S, 5.8S and 5S rRNA) and at least 46 different proteins.

Its subcellular location is the cytoplasm. The protein localises to the nucleus. In terms of biological role, component of the ribosome, a large ribonucleoprotein complex responsible for the synthesis of proteins in the cell. The small ribosomal subunit (SSU) binds messenger RNAs (mRNAs) and translates the encoded message by selecting cognate aminoacyl-transfer RNA (tRNA) molecules. The large subunit (LSU) contains the ribosomal catalytic site termed the peptidyl transferase center (PTC), which catalyzes the formation of peptide bonds, thereby polymerizing the amino acids delivered by tRNAs into a polypeptide chain. The nascent polypeptides leave the ribosome through a tunnel in the LSU and interact with protein factors that function in enzymatic processing, targeting, and the membrane insertion of nascent chains at the exit of the ribosomal tunnel. The chain is Large ribosomal subunit protein uL2C (rpl803) from Schizosaccharomyces pombe (strain 972 / ATCC 24843) (Fission yeast).